The sequence spans 334 residues: MIREKLKVSTQTLQWKCVESRVDSKRLYYGRFILSPLMKGQADTIGITMRRILLGEIEGTCITRAKSEKIPHEYSTIVGIQESIHEILMNLKEIVLRSNLYGTREASICFKGPGYVTAQDIILPSVEVIDNTQHIANLTEPINLCIELQIERKRGYRIKTLNNIQDGSYTIDAVFMPVRNANHSIHSYVNGNQKQEILFLEIWTNGSLTPKEALYEASRNLIDLFIPFLHAEEENLNFENNQHKMTLPLFTFHDHDRFVKDKLRKNQKEITLKSIFIDQLELPPRIYNCLKKSNIHTVLELLNKSQEDLMKIEHFRVEDLKFILNILQIENHFV.

The alpha N-terminal domain (alpha-NTD) stretch occupies residues 1-232 (MIREKLKVST…DLFIPFLHAE (232 aa)). An alpha C-terminal domain (alpha-CTD) region spans residues 267–334 (QKEITLKSIF…NILQIENHFV (68 aa)).

This sequence belongs to the RNA polymerase alpha chain family. In plastids the minimal PEP RNA polymerase catalytic core is composed of four subunits: alpha, beta, beta', and beta''. When a (nuclear-encoded) sigma factor is associated with the core the holoenzyme is formed, which can initiate transcription.

Its subcellular location is the plastid. The protein localises to the chloroplast. The enzyme catalyses RNA(n) + a ribonucleoside 5'-triphosphate = RNA(n+1) + diphosphate. Functionally, DNA-dependent RNA polymerase catalyzes the transcription of DNA into RNA using the four ribonucleoside triphosphates as substrates. The protein is DNA-directed RNA polymerase subunit alpha of Pisum sativum (Garden pea).